A 308-amino-acid chain; its full sequence is MVSSNCSTEDSFKYTLYGCVFSMVFVLGLIANCVAIYIFTFTLKVRNETTTYMLNLAISDLLFVFTLPFRIYYFVVRNWPFGDVLCKISVTLFYTNMYGSILFLTCISVDRFLAIVHPFRSKTLRTKRNARIVCVAVWITVLAGSTPASFFQSTNRQNNTEQRTCFENFPESTWKTYLSRIVIFIEIVGFFIPLILNVTCSTMVLRTLNKPLTLSRNKLSKKKVLKMIFVHLVIFCFCFVPYNITLILYSLMRTQTWINCSVVTAVRTMYPVTLCIAVSNCCFDPIVYYFTSDTNSELDKKQQVHQNT.

Residues 1–16 lie on the Extracellular side of the membrane; the sequence is MVSSNCSTEDSFKYTL. N5 carries N-linked (GlcNAc...) asparagine glycosylation. A helical membrane pass occupies residues 17 to 43; that stretch reads YGCVFSMVFVLGLIANCVAIYIFTFTL. The Cytoplasmic segment spans residues 44 to 52; sequence KVRNETTTY. The chain crosses the membrane as a helical span at residues 53 to 76; that stretch reads MLNLAISDLLFVFTLPFRIYYFVV. Residues 77-89 are Extracellular-facing; that stretch reads RNWPFGDVLCKIS. An intrachain disulfide couples C86 to C165. The helical transmembrane segment at 90–109 threads the bilayer; sequence VTLFYTNMYGSILFLTCISV. Residues 110–130 lie on the Cytoplasmic side of the membrane; the sequence is DRFLAIVHPFRSKTLRTKRNA. The helical transmembrane segment at 131-151 threads the bilayer; the sequence is RIVCVAVWITVLAGSTPASFF. Topologically, residues 152-178 are extracellular; sequence QSTNRQNNTEQRTCFENFPESTWKTYL. A helical transmembrane segment spans residues 179-206; it reads SRIVIFIEIVGFFIPLILNVTCSTMVLR. The Cytoplasmic portion of the chain corresponds to 207–224; the sequence is TLNKPLTLSRNKLSKKKV. A helical membrane pass occupies residues 225-250; sequence LKMIFVHLVIFCFCFVPYNITLILYS. At 251–269 the chain is on the extracellular side; it reads LMRTQTWINCSVVTAVRTM. Residues 270–289 form a helical membrane-spanning segment; it reads YPVTLCIAVSNCCFDPIVYY. Residue C281 is the site of S-palmitoyl cysteine attachment. The Cytoplasmic portion of the chain corresponds to 290 to 308; it reads FTSDTNSELDKKQQVHQNT.

Belongs to the G-protein coupled receptor 1 family. In terms of tissue distribution, induced in activated T-cells.

Its subcellular location is the cell membrane. Its function is as follows. Binds to oleoyl-L-alpha-lysophosphatidic acid (LPA). Intracellular cAMP is involved in the receptor activation. The polypeptide is Lysophosphatidic acid receptor 6 (LPAR6) (Gallus gallus (Chicken)).